Reading from the N-terminus, the 376-residue chain is Probable ATP-dependent RNA helicase YfmL (376 aa).

Residues Ala-35–Leu-205 enclose the Helicase ATP-binding domain. Residue Ser-48–Thr-55 participates in ATP binding. Positions Asp-153–Asp-156 match the DEAD box motif. In terms of domain architecture, Helicase C-terminal spans Lys-231–Lys-374.

It belongs to the DEAD box helicase family.

It catalyses the reaction ATP + H2O = ADP + phosphate + H(+). Its function is as follows. A probable DEAD-box RNA helicase that plays a role in ribosomal 50S subunit assembly. May be a non-specific RNA helicase. This Bacillus subtilis (strain 168) protein is Probable ATP-dependent RNA helicase YfmL (yfmL).